Consider the following 442-residue polypeptide: Thymidine phosphorylase (442 aa).

It belongs to the thymidine/pyrimidine-nucleoside phosphorylase family. As to quaternary structure, homodimer.

The catalysed reaction is thymidine + phosphate = 2-deoxy-alpha-D-ribose 1-phosphate + thymine. It participates in pyrimidine metabolism; dTMP biosynthesis via salvage pathway; dTMP from thymine: step 1/2. The enzymes which catalyze the reversible phosphorolysis of pyrimidine nucleosides are involved in the degradation of these compounds and in their utilization as carbon and energy sources, or in the rescue of pyrimidine bases for nucleotide synthesis. The protein is Thymidine phosphorylase of Vibrio parahaemolyticus serotype O3:K6 (strain RIMD 2210633).